A 420-amino-acid polypeptide reads, in one-letter code: Tyrosine--tRNA ligase (420 aa).

Y33 is a binding site for L-tyrosine. The 'HIGH' region motif lies at 38 to 47 (PTGPSLHAGH). Residues Y167 and Q171 each coordinate L-tyrosine. The 'KMSKS' region signature appears at 227–231 (KFGKS). K230 is an ATP binding site. Residues 352 to 418 (RTIIDLLVAS…GKKNFAGVQI (67 aa)) form the S4 RNA-binding domain.

The protein belongs to the class-I aminoacyl-tRNA synthetase family. TyrS type 1 subfamily. As to quaternary structure, homodimer.

It localises to the cytoplasm. It carries out the reaction tRNA(Tyr) + L-tyrosine + ATP = L-tyrosyl-tRNA(Tyr) + AMP + diphosphate + H(+). Catalyzes the attachment of tyrosine to tRNA(Tyr) in a two-step reaction: tyrosine is first activated by ATP to form Tyr-AMP and then transferred to the acceptor end of tRNA(Tyr). The polypeptide is Tyrosine--tRNA ligase (Corynebacterium glutamicum (strain ATCC 13032 / DSM 20300 / JCM 1318 / BCRC 11384 / CCUG 27702 / LMG 3730 / NBRC 12168 / NCIMB 10025 / NRRL B-2784 / 534)).